A 435-amino-acid chain; its full sequence is Serine hydroxymethyltransferase 2 (435 aa).

Residues L135 and 139–141 (GHL) each bind (6S)-5,6,7,8-tetrahydrofolate. An N6-(pyridoxal phosphate)lysine modification is found at K244. Residue E260 participates in (6S)-5,6,7,8-tetrahydrofolate binding.

The protein belongs to the SHMT family. In terms of assembly, homodimer. Pyridoxal 5'-phosphate serves as cofactor.

Its subcellular location is the cytoplasm. The catalysed reaction is (6R)-5,10-methylene-5,6,7,8-tetrahydrofolate + glycine + H2O = (6S)-5,6,7,8-tetrahydrofolate + L-serine. It functions in the pathway one-carbon metabolism; tetrahydrofolate interconversion. The protein operates within amino-acid biosynthesis; glycine biosynthesis; glycine from L-serine: step 1/1. Functionally, catalyzes the reversible interconversion of serine and glycine with tetrahydrofolate (THF) serving as the one-carbon carrier. This reaction serves as the major source of one-carbon groups required for the biosynthesis of purines, thymidylate, methionine, and other important biomolecules. Also exhibits THF-independent aldolase activity toward beta-hydroxyamino acids, producing glycine and aldehydes, via a retro-aldol mechanism. In Vibrio cholerae serotype O1 (strain ATCC 39315 / El Tor Inaba N16961), this protein is Serine hydroxymethyltransferase 2.